Reading from the N-terminus, the 285-residue chain is Putative hydrolase DDAH2 (285 aa).

His-171 (proton donor) is an active-site residue. Residue Cys-276 is the Nucleophile of the active site.

This sequence belongs to the DDAH family. Phosphorylated by TBK1. Phosphorylation inhibits the translocation into the mitochondrion upon Sendai viral infection. Detected in heart, placenta, lung, liver, skeletal muscle, kidney and pancreas, and at very low levels in brain.

It localises to the cytoplasm. The protein resides in the mitochondrion. Putative hydrolase with unknown substrate. Does not hydrolyze N(G),N(G)-dimethyl-L-arginine (ADMA) which acts as an inhibitor of NOS. In endothelial cells, induces expression of vascular endothelial growth factor (VEGF) via phosphorylation of the transcription factor SP1 by PKA in a process that is independent of NO and NO synthase. Similarly, enhances pancreatic insulin secretion through SP1-mediated transcriptional up-regulation of secretagogin/SCGN, an insulin vesicle docking protein. Upon viral infection, relocates to mitochondria where it promotes mitochondrial fission through activation of DNM1L leading to the inhibition of innate response activation mediated by MAVS. In Homo sapiens (Human), this protein is Putative hydrolase DDAH2.